The following is a 359-amino-acid chain: Protein mab-21-like 2-A (359 aa).

Belongs to the mab-21 family.

The protein resides in the nucleus. It is found in the cytoplasm. In terms of biological role, required for normal development of the eye. May promote dorsalization of the developing embryo by antagonizing the ventralizing factor bmp4. Functional antagonism of bmp4 may require interaction with smad1. Required for gastrulation and subsequent neural development. May function as a transcriptional repressor. In Xenopus laevis (African clawed frog), this protein is Protein mab-21-like 2-A (mab21l2-a).